Consider the following 198-residue polypeptide: Heme oxygenase PigA (198 aa).

Residue H26 participates in heme b binding.

Belongs to the heme oxygenase family.

The enzyme catalyses heme b + 3 AH2 + 3 O2 + 2 H(+) = biliverdin IXbeta + CO + Fe(2+) + 3 A + 3 H2O. It catalyses the reaction heme b + 3 AH2 + 3 O2 + 3 H(+) = biliverdin IXdelta + CO + Fe(2+) + 3 A + 3 H2O. Involved in heme degradation. Catalyzes the degradation of heme to biliverdin, with the release of iron. Forms biliverdin delta (70%) and beta (30%). Under anaerobic conditions ferredoxin--NADP(+) reductase (fpr) can provide the necessary electrons; Bfd is not required. The protein is Heme oxygenase PigA of Pseudomonas aeruginosa (strain ATCC 15692 / DSM 22644 / CIP 104116 / JCM 14847 / LMG 12228 / 1C / PRS 101 / PAO1).